The following is a 194-amino-acid chain: PPE family protein PPE41 (194 aa).

This sequence belongs to the mycobacterial PPE family. In terms of assembly, forms a heterodimer with PE25. The dimer forms a 1:1:1 heterotrimeric complex with EspG5. PPE41 interacts directly with EspG5.

Its subcellular location is the secreted. It is found in the cell surface. In terms of biological role, the PE25/PPE41 dimer induces both a strong humoral and cellular immune response. The dimer induces necrosis, but not apoptosis, in mouse macrophage cells. It also induces activation and maturation of mouse dendritic cells and drives Th2-biased immune responses. The sequence is that of PPE family protein PPE41 from Mycobacterium tuberculosis (strain ATCC 25618 / H37Rv).